We begin with the raw amino-acid sequence, 292 residues long: tRNA dimethylallyltransferase (292 aa).

10–17 (GPTASGKS) contacts ATP. Residue 12–17 (TASGKS) coordinates substrate. Interaction with substrate tRNA regions lie at residues 35-38 (DSMQ) and 159-163 (QRIVR).

It belongs to the IPP transferase family. As to quaternary structure, monomer. Mg(2+) is required as a cofactor.

The catalysed reaction is adenosine(37) in tRNA + dimethylallyl diphosphate = N(6)-dimethylallyladenosine(37) in tRNA + diphosphate. Its function is as follows. Catalyzes the transfer of a dimethylallyl group onto the adenine at position 37 in tRNAs that read codons beginning with uridine, leading to the formation of N6-(dimethylallyl)adenosine (i(6)A). The protein is tRNA dimethylallyltransferase of Chelativorans sp. (strain BNC1).